The primary structure comprises 267 residues: Small ribosomal subunit protein uS2 (267 aa).

The disordered stretch occupies residues Leu247–Glu267.

The protein belongs to the universal ribosomal protein uS2 family.

The chain is Small ribosomal subunit protein uS2 from Synechococcus sp. (strain JA-3-3Ab) (Cyanobacteria bacterium Yellowstone A-Prime).